A 59-amino-acid polypeptide reads, in one-letter code: Large ribosomal subunit protein bL32 (59 aa).

The tract at residues 1 to 20 (MAVPRNRHSNARKNIRRSHH) is disordered.

It belongs to the bacterial ribosomal protein bL32 family.

This Chlamydia trachomatis serovar A (strain ATCC VR-571B / DSM 19440 / HAR-13) protein is Large ribosomal subunit protein bL32.